The chain runs to 107 residues: Acidic phospholipase A2 2 (107 aa).

6 disulfide bridges follow: Cys26–Cys100, Cys28–Cys38, Cys37–Cys82, Cys43–Cys107, Cys44–Cys75, and Cys62–Cys73. Ca(2+) is bound by residues Tyr27, Gly29, and Gly31. His41 is an active-site residue. Asp42 lines the Ca(2+) pocket. Asp76 is a catalytic residue.

Requires Ca(2+) as cofactor. Expressed by the venom gland.

The protein resides in the secreted. It carries out the reaction a 1,2-diacyl-sn-glycero-3-phosphocholine + H2O = a 1-acyl-sn-glycero-3-phosphocholine + a fatty acid + H(+). In terms of biological role, PLA2 catalyzes the calcium-dependent hydrolysis of the 2-acyl groups in 3-sn-phosphoglycerides. This Bothrops insularis (Golden lancehead) protein is Acidic phospholipase A2 2.